The sequence spans 209 residues: Protein lin-28 homolog A (209 aa).

A disordered region spans residues 1–31 (MGSVSNQQFAGGCAKAAEEAPEEAPEDAARA). N-acetylglycine is present on glycine 2. The residue at position 3 (serine 3) is a Phosphoserine. Residues 39-112 (HGAGICKWFN…GLESIRVTGP (74 aa)) form the CSD domain. A flexible linker region spans residues 113–136 (GGVFCIGSERRPKGKSMQKRRSKG). A Phosphoserine modification is found at serine 120. 2 CCHC-type zinc fingers span residues 137-154 (DRCY…ECKL) and 159-176 (KKCH…SCPL). Residues 178–209 (AQQGPSAQGKPTYFREEEEEIHSPTLLPEAQN) form a disordered region. Serine 200 is modified (phosphoserine).

It belongs to the lin-28 family. In terms of assembly, monomer. During skeletal muscle differentiation, associated with translation initiation complexes in the polysomal compartment. Directly interacts with EIF3S2. Interacts with NCL in an RNA-dependent manner. Interacts (via C-terminus) with DHX9 (via N- and C-terminus); this interaction occurs in a RNA-independent manner. Interacts with TUT4 in the presence of pre-let-7 RNA. Expressed in embryonic stem cells, placenta and testis. Tends to be up-regulated in HER2-overexpressing breast tumors.

Its subcellular location is the cytoplasm. It is found in the rough endoplasmic reticulum. It localises to the P-body. The protein resides in the stress granule. The protein localises to the nucleus. Its subcellular location is the nucleolus. In terms of biological role, RNA-binding protein that inhibits processing of pre-let-7 miRNAs and regulates translation of mRNAs that control developmental timing, pluripotency and metabolism. Seems to recognize a common structural G-quartet (G4) feature in its miRNA and mRNA targets. 'Translational enhancer' that drives specific mRNAs to polysomes and increases the efficiency of protein synthesis. Its association with the translational machinery and target mRNAs results in an increased number of initiation events per molecule of mRNA and, indirectly, in mRNA stabilization. Binds IGF2 mRNA, MYOD1 mRNA, ARBP/36B4 ribosomal protein mRNA and its own mRNA. Essential for skeletal muscle differentiation program through the translational up-regulation of IGF2 expression. Suppressor of microRNA (miRNA) biogenesis, including that of let-7, miR107, miR-143 and miR-200c. Specifically binds the miRNA precursors (pre-miRNAs), recognizing an 5'-GGAG-3' motif found in pre-miRNA terminal loop, and recruits TUT4 and TUT7 uridylyltransferases. This results in the terminal uridylation of target pre-miRNAs. Uridylated pre-miRNAs fail to be processed by Dicer and undergo degradation. The repression of let-7 expression is required for normal development and contributes to maintain the pluripotent state by preventing let-7-mediated differentiation of embryonic stem cells. Localized to the periendoplasmic reticulum area, binds to a large number of spliced mRNAs and inhibits the translation of mRNAs destined for the ER, reducing the synthesis of transmembrane proteins, ER or Golgi lumen proteins, and secretory proteins. Binds to and enhances the translation of mRNAs for several metabolic enzymes, such as PFKP, PDHA1 or SDHA, increasing glycolysis and oxidative phosphorylation. Which, with the let-7 repression may enhance tissue repair in adult tissue. In Homo sapiens (Human), this protein is Protein lin-28 homolog A (LIN28A).